Consider the following 418-residue polypeptide: Tryptophan synthase beta chain (418 aa).

N6-(pyridoxal phosphate)lysine is present on K109.

The protein belongs to the TrpB family. Tetramer of two alpha and two beta chains. Pyridoxal 5'-phosphate is required as a cofactor.

It carries out the reaction (1S,2R)-1-C-(indol-3-yl)glycerol 3-phosphate + L-serine = D-glyceraldehyde 3-phosphate + L-tryptophan + H2O. Its pathway is amino-acid biosynthesis; L-tryptophan biosynthesis; L-tryptophan from chorismate: step 5/5. In terms of biological role, the beta subunit is responsible for the synthesis of L-tryptophan from indole and L-serine. The protein is Tryptophan synthase beta chain of Thermus thermophilus (strain ATCC 27634 / DSM 579 / HB8).